Here is a 415-residue protein sequence, read N- to C-terminus: Phosphoglycerate kinase (415 aa).

Substrate-binding positions include 27 to 29 (DVN), arginine 44, 67 to 70 (HQGR), arginine 124, and arginine 164. Residues glutamate 336 and 362–365 (GGHM) each bind ATP.

Belongs to the phosphoglycerate kinase family. In terms of assembly, monomer.

Its subcellular location is the cytoplasm. The catalysed reaction is (2R)-3-phosphoglycerate + ATP = (2R)-3-phospho-glyceroyl phosphate + ADP. Its pathway is carbohydrate degradation; glycolysis; pyruvate from D-glyceraldehyde 3-phosphate: step 2/5. The chain is Phosphoglycerate kinase from Sulfolobus acidocaldarius (strain ATCC 33909 / DSM 639 / JCM 8929 / NBRC 15157 / NCIMB 11770).